Consider the following 328-residue polypeptide: Carbonic anhydrase, chloroplastic (328 aa).

Residues 1-15 (MSTSSINGFSLSSLS) are compositionally biased toward low complexity. The disordered stretch occupies residues 1-26 (MSTSSINGFSLSSLSPAKTSTKRTTL). Residues 1–70 (MSTSSINGFS…IITPVLREEM (70 aa)) constitute a chloroplast transit peptide.

This sequence belongs to the beta-class carbonic anhydrase family. In terms of assembly, homohexamer.

It is found in the plastid. The protein localises to the chloroplast stroma. The catalysed reaction is hydrogencarbonate + H(+) = CO2 + H2O. In terms of biological role, reversible hydration of carbon dioxide. This Pisum sativum (Garden pea) protein is Carbonic anhydrase, chloroplastic.